Reading from the N-terminus, the 273-residue chain is Dermonecrotic toxin LhSicTox-alphaIA2avii (273 aa).

Histidine 5 is an active-site residue. Glutamate 25 and aspartate 27 together coordinate Mg(2+). The active-site Nucleophile is histidine 41. 2 disulfide bridges follow: cysteine 45-cysteine 51 and cysteine 47-cysteine 190. Aspartate 85 contributes to the Mg(2+) binding site.

This sequence belongs to the arthropod phospholipase D family. Class II subfamily. The cofactor is Mg(2+). As to expression, expressed by the venom gland.

It is found in the secreted. It catalyses the reaction an N-(acyl)-sphingosylphosphocholine = an N-(acyl)-sphingosyl-1,3-cyclic phosphate + choline. It carries out the reaction an N-(acyl)-sphingosylphosphoethanolamine = an N-(acyl)-sphingosyl-1,3-cyclic phosphate + ethanolamine. The enzyme catalyses a 1-acyl-sn-glycero-3-phosphocholine = a 1-acyl-sn-glycero-2,3-cyclic phosphate + choline. The catalysed reaction is a 1-acyl-sn-glycero-3-phosphoethanolamine = a 1-acyl-sn-glycero-2,3-cyclic phosphate + ethanolamine. In terms of biological role, dermonecrotic toxins cleave the phosphodiester linkage between the phosphate and headgroup of certain phospholipids (sphingolipid and lysolipid substrates), forming an alcohol (often choline) and a cyclic phosphate. This toxin acts on sphingomyelin (SM). It may also act on ceramide phosphoethanolamine (CPE), lysophosphatidylcholine (LPC) and lysophosphatidylethanolamine (LPE), but not on lysophosphatidylserine (LPS), and lysophosphatidylglycerol (LPG). It acts by transphosphatidylation, releasing exclusively cyclic phosphate products as second products. Induces dermonecrosis, hemolysis, increased vascular permeability, edema, inflammatory response, and platelet aggregation. The sequence is that of Dermonecrotic toxin LhSicTox-alphaIA2avii from Loxosceles hirsuta (Recluse spider).